Reading from the N-terminus, the 136-residue chain is Salivary protein 15 Iric-2 (136 aa).

The N-terminal stretch at 1–22 is a signal peptide; sequence MESFVAMKVVCIVLLFVIAAEA. A glycan (N-linked (GlcNAc...) asparagine) is linked at asparagine 105. The tract at residues 117 to 136 is CD4-binding; it reads GPKNQTCENKDQCVPHIPGC.

It belongs to the salp15 family. As to quaternary structure, interacts with host CD4. Interacts with host DC-SIGN (CD209). Interacts with Borrelia outer surface protein C (OspC). As to expression, expressed in salivary glands. Detected in fed adult female.

It localises to the secreted. Salivary tick protein that downregulates host immune system by binding to both dendritic cells, and CD4(+) T cells. Specifically binds to the CD4 coreceptor on T cells. This interaction prevents the activation of the Src kinase, Lck, and its downstream substrate Zap-70, and results in deficient activation of PLCgamma1, the repression of calcium fluxes triggered by T-cell antigen receptor (TCR) ligation, and a subsequent reduction in interleukin-2 production. This salivary protein also binds to DC-SIGN (CD209) on dendritic cells (DC) and activates the Raf-1 kinase/MEK signaling pathway that results in down-regulating expression of pro-inflammatory cytokines. Furthermore, it inhibits T cell proliferation induced by DCs. In addition, it inhibits in vitro keratinocyte inflammation induced by Borrelia burgdorferi or by the major outer surface protein (OspC) of Borrelia. In addition, it downregulates chemokines and monocyte chemoattractant protein 1, as well as several antimicrobial peptides such as defensins, cathelicidin, psoriasin, and RNase 7. Apart from its immunomodulatory activities, it is also associated with protection of Borrelia spirochetes from antibody-mediated killing through its binding to OspC. In vivo, tests on different immune disease animal models show promising therapeutic results, e.g., in inhibiting HIV infection, experimental autoimmune encephalomyelitis, transplantation rejection, and asthma. The chain is Salivary protein 15 Iric-2 from Ixodes ricinus (Common tick).